The sequence spans 693 residues: Elongation factor G (693 aa).

A tr-type G domain is found at 8-283; the sequence is PQQRNIGIMA…AVVEYLPSPV (276 aa). Residues 17–24, 81–85, and 135–138 each bind GTP; these read AHIDAGKT, DTPGH, and NKMD.

The protein belongs to the TRAFAC class translation factor GTPase superfamily. Classic translation factor GTPase family. EF-G/EF-2 subfamily.

The protein localises to the cytoplasm. Functionally, catalyzes the GTP-dependent ribosomal translocation step during translation elongation. During this step, the ribosome changes from the pre-translocational (PRE) to the post-translocational (POST) state as the newly formed A-site-bound peptidyl-tRNA and P-site-bound deacylated tRNA move to the P and E sites, respectively. Catalyzes the coordinated movement of the two tRNA molecules, the mRNA and conformational changes in the ribosome. This chain is Elongation factor G, found in Oleidesulfovibrio alaskensis (strain ATCC BAA-1058 / DSM 17464 / G20) (Desulfovibrio alaskensis).